The following is a 394-amino-acid chain: MSYSCCLPSLGCRTSCSSRPCVPPSCHGYTLPGACNIPANVSNCNWFCEGSFNGSEKETMQFLNDRLASYLEKVRQLERDNAELEKLIQERSQQQEPLLCPSYQSYFKTIEELQQKILCAKAENARLVVNIDNAKLASDDFRSKYQTEQSLRLLVESDINSIRRILDELTLCKSDLESQVESLREELICLKKNHEEEVNTLRSQLGDRLNVEVDTAPTVDLNQVLNETRSQYEALVEINRREVEQWFATQTEELNKQVVSSSEQLQSCQAEIIELRRTVNALEIELQAQHNLRDSLENTLTESEAHYSSQLSQVQSLITNVESQLAEIRCDLERQNQEYQVLLDVRARLECEINTYRSLLESEDCKLPCNPCATTNASGNSCGPCGTSQKGCCN.

Residues 1-56 are head; it reads MSYSCCLPSLGCRTSCSSRPCVPPSCHGYTLPGACNIPANVSNCNWFCEGSFNGSE. One can recognise an IF rod domain in the interval 56 to 367; it reads EKETMQFLND…SLLESEDCKL (312 aa). The segment at 57–91 is coil 1A; that stretch reads KETMQFLNDRLASYLEKVRQLERDNAELEKLIQER. A linker 1 region spans residues 92-102; sequence SQQQEPLLCPS. A coil 1B region spans residues 103-203; sequence YQSYFKTIEE…HEEEVNTLRS (101 aa). Residues 204–219 form a linker 12 region; the sequence is QLGDRLNVEVDTAPTV. Positions 220-363 are coil 2; it reads DLNQVLNETR…NTYRSLLESE (144 aa). The tail stretch occupies residues 364-394; the sequence is DCKLPCNPCATTNASGNSCGPCGTSQKGCCN.

This sequence belongs to the intermediate filament family. In terms of tissue distribution, expressed in the hair follicles.

The sequence is that of Keratin, type I cuticular Ha4 (KRT34) from Homo sapiens (Human).